Consider the following 205-residue polypeptide: Large ribosomal subunit protein uL18 (205 aa).

Belongs to the universal ribosomal protein uL18 family. Part of the 50S ribosomal subunit. Contacts the 5S and 23S rRNAs.

Its function is as follows. This is one of the proteins that bind and probably mediate the attachment of the 5S RNA into the large ribosomal subunit, where it forms part of the central protuberance. This Pyrobaculum arsenaticum (strain DSM 13514 / JCM 11321 / PZ6) protein is Large ribosomal subunit protein uL18.